The following is a 108-amino-acid chain: Protein RnfH (108 aa).

The protein belongs to the UPF0125 (RnfH) family.

The chain is Protein RnfH from Laribacter hongkongensis (strain HLHK9).